Consider the following 303-residue polypeptide: UDP-N-acetylenolpyruvoylglucosamine reductase (303 aa).

The FAD-binding PCMH-type domain occupies 27-207 (KVGGISQVFY…TSISQKLQKI (181 aa)). R175 is a catalytic residue. The active-site Proton donor is the S224. The active site involves E294.

The protein belongs to the MurB family. Requires FAD as cofactor.

It localises to the cytoplasm. The catalysed reaction is UDP-N-acetyl-alpha-D-muramate + NADP(+) = UDP-N-acetyl-3-O-(1-carboxyvinyl)-alpha-D-glucosamine + NADPH + H(+). It participates in cell wall biogenesis; peptidoglycan biosynthesis. Its function is as follows. Cell wall formation. The chain is UDP-N-acetylenolpyruvoylglucosamine reductase from Orientia tsutsugamushi (strain Boryong) (Rickettsia tsutsugamushi).